Consider the following 132-residue polypeptide: Agouti-signaling protein (132 aa).

The N-terminal stretch at 1-22 is a signal peptide; the sequence is MDVTRLLLATLLVFLCFFTVYS. Asparagine 39 carries N-linked (GlcNAc...) asparagine glycosylation. The disordered stretch occupies residues 62–88; sequence ISRKEAEKKRSSKKEASMKKVAQPRTP. Basic and acidic residues predominate over residues 63 to 79; sequence SRKEAEKKRSSKKEASM. Cystine bridges form between cysteine 93-cysteine 108, cysteine 100-cysteine 114, cysteine 107-cysteine 125, cysteine 111-cysteine 132, and cysteine 116-cysteine 123. An Agouti domain is found at 93-132; that stretch reads CVATRYSCKPPAPACCDPCASCQCRFFRSACSCRVLRLNC.

It is found in the secreted. Functionally, involved in the regulation of melanogenesis. The binding of ASP to MC1R precludes alpha-MSH initiated signaling and thus blocks production of cAMP, leading to a down-regulation of eumelanogenesis (brown/black pigment) and thus increasing synthesis of pheomelanin (yellow/red pigment). This is Agouti-signaling protein (ASIP) from Semnopithecus entellus (Northern plains gray langur).